We begin with the raw amino-acid sequence, 311 residues long: tRNA-cytidine(32) 2-sulfurtransferase (311 aa).

Positions 47–52 (SGGKDS) match the PP-loop motif motif. Positions 122, 125, and 213 each coordinate [4Fe-4S] cluster.

The protein belongs to the TtcA family. In terms of assembly, homodimer. Requires Mg(2+) as cofactor. It depends on [4Fe-4S] cluster as a cofactor.

It is found in the cytoplasm. The enzyme catalyses cytidine(32) in tRNA + S-sulfanyl-L-cysteinyl-[cysteine desulfurase] + AH2 + ATP = 2-thiocytidine(32) in tRNA + L-cysteinyl-[cysteine desulfurase] + A + AMP + diphosphate + H(+). Its pathway is tRNA modification. In terms of biological role, catalyzes the ATP-dependent 2-thiolation of cytidine in position 32 of tRNA, to form 2-thiocytidine (s(2)C32). The sulfur atoms are provided by the cysteine/cysteine desulfurase (IscS) system. This Shigella boydii serotype 4 (strain Sb227) protein is tRNA-cytidine(32) 2-sulfurtransferase.